Reading from the N-terminus, the 232-residue chain is Orotidine 5'-phosphate decarboxylase (232 aa).

Substrate-binding positions include Asp-13, Lys-35, 62–71, Thr-122, Arg-182, Gln-191, Gly-211, and Arg-212; that span reads DLKFHDIPNT. Catalysis depends on Lys-64, which acts as the Proton donor.

The protein belongs to the OMP decarboxylase family. Type 1 subfamily. Homodimer.

It carries out the reaction orotidine 5'-phosphate + H(+) = UMP + CO2. It participates in pyrimidine metabolism; UMP biosynthesis via de novo pathway; UMP from orotate: step 2/2. Its function is as follows. Catalyzes the decarboxylation of orotidine 5'-monophosphate (OMP) to uridine 5'-monophosphate (UMP). The protein is Orotidine 5'-phosphate decarboxylase of Pseudomonas aeruginosa (strain LESB58).